The primary structure comprises 333 residues: Ketol-acid reductoisomerase (NADP(+)) (333 aa).

Positions 2–182 constitute a KARI N-terminal Rossmann domain; sequence AKIYYDEDAS…GATRAGVIET (181 aa). Residues 25–28, Ser51, Ser53, and 83–86 each bind NADP(+); these read YGSQ and DTVQ. His108 is an active-site residue. Gly134 provides a ligand contact to NADP(+). The KARI C-terminal knotted domain occupies 183–327; it reads TFKEETETDL…EELRKMMPWL (145 aa). Residues Asp191, Glu195, Glu227, and Glu231 each coordinate Mg(2+). Ser252 lines the substrate pocket.

It belongs to the ketol-acid reductoisomerase family. Mg(2+) is required as a cofactor.

It carries out the reaction (2R)-2,3-dihydroxy-3-methylbutanoate + NADP(+) = (2S)-2-acetolactate + NADPH + H(+). It catalyses the reaction (2R,3R)-2,3-dihydroxy-3-methylpentanoate + NADP(+) = (S)-2-ethyl-2-hydroxy-3-oxobutanoate + NADPH + H(+). It functions in the pathway amino-acid biosynthesis; L-isoleucine biosynthesis; L-isoleucine from 2-oxobutanoate: step 2/4. Its pathway is amino-acid biosynthesis; L-valine biosynthesis; L-valine from pyruvate: step 2/4. Functionally, involved in the biosynthesis of branched-chain amino acids (BCAA). Catalyzes an alkyl-migration followed by a ketol-acid reduction of (S)-2-acetolactate (S2AL) to yield (R)-2,3-dihydroxy-isovalerate. In the isomerase reaction, S2AL is rearranged via a Mg-dependent methyl migration to produce 3-hydroxy-3-methyl-2-ketobutyrate (HMKB). In the reductase reaction, this 2-ketoacid undergoes a metal-dependent reduction by NADPH to yield (R)-2,3-dihydroxy-isovalerate. The polypeptide is Ketol-acid reductoisomerase (NADP(+)) (Aquifex aeolicus (strain VF5)).